A 952-amino-acid chain; its full sequence is UvrABC system protein A (952 aa).

31–38 (GVSGSGKS) contributes to the ATP binding site. The segment at 253 to 280 (CPEHGSVLEELEPRIFSFNSPYGACPAC) adopts a C4-type zinc-finger fold. 2 consecutive ABC transporter domains span residues 309-591 (WSRG…PQSL) and 611-938 (GNGK…AFLA). 643-650 (GPSGSGKS) serves as a coordination point for ATP. The segment at 742–768 (CEACGGDGTVKIEMLFLPDLYVPCEVC) adopts a C4-type zinc-finger fold.

The protein belongs to the ABC transporter superfamily. UvrA family. In terms of assembly, forms a heterotetramer with UvrB during the search for lesions.

The protein localises to the cytoplasm. In terms of biological role, the UvrABC repair system catalyzes the recognition and processing of DNA lesions. UvrA is an ATPase and a DNA-binding protein. A damage recognition complex composed of 2 UvrA and 2 UvrB subunits scans DNA for abnormalities. When the presence of a lesion has been verified by UvrB, the UvrA molecules dissociate. This Thermus thermophilus (strain ATCC 27634 / DSM 579 / HB8) protein is UvrABC system protein A.